Reading from the N-terminus, the 559-residue chain is Glucans biosynthesis protein G (559 aa).

An N-terminal signal peptide occupies residues 1 to 37 (MVSLLSCGTSASSHIVKKALTRLSLAMAAGLCFNLAA).

The protein belongs to the OpgD/OpgG family.

Its subcellular location is the periplasm. The protein operates within glycan metabolism; osmoregulated periplasmic glucan (OPG) biosynthesis. In terms of biological role, involved in the biosynthesis of osmoregulated periplasmic glucans (OPGs). The protein is Glucans biosynthesis protein G of Shewanella frigidimarina (strain NCIMB 400).